We begin with the raw amino-acid sequence, 405 residues long: Saccharopepsin (405 aa).

The first 22 residues, 1-22 (MFSLKALLPLALLLVSANQVAA), serve as a signal peptide directing secretion. Positions 23–76 (KVHKAKIYKHELSDEMKEVTFEQHLAHLGQKYLTQFEKANPEVVFSREHPFFTE) are cleaved as a propeptide — activation peptide. A Peptidase A1 domain is found at 91–402 (YYTDITLGTP…DLGNNAVGLA (312 aa)). Asp109 is a catalytic residue. Residues Cys122 and Cys127 are joined by a disulfide bond. Asn144 carries N-linked (GlcNAc...) asparagine glycosylation. Residue Asp294 is part of the active site. A disulfide bond links Cys328 and Cys361. Asn345 is a glycosylation site (N-linked (GlcNAc...) asparagine).

The protein belongs to the peptidase A1 family.

Its subcellular location is the vacuole. It catalyses the reaction Hydrolysis of proteins with broad specificity for peptide bonds. Cleaves -Leu-Leu-|-Val-Tyr- bond in a synthetic substrate. Does not act on esters of Tyr or Arg.. Aspartyl protease implicated in the post-translational regulation of S.cerevisiae vacuolar proteinases. Acts on YSCB, on YSCY and on itself. This chain is Saccharopepsin (PEP4), found in Saccharomyces cerevisiae (strain ATCC 204508 / S288c) (Baker's yeast).